Consider the following 155-residue polypeptide: Anaerobic ribonucleoside-triphosphate reductase-activating protein (155 aa).

[4Fe-4S] cluster-binding residues include Cys-26, Cys-30, and Cys-33. S-adenosyl-L-methionine contacts are provided by residues 32–34 and Gly-74; that span reads GCY.

The protein belongs to the organic radical-activating enzymes family. As to quaternary structure, forms a tetramer composed of two NrdD and two NrdG subunits. [4Fe-4S] cluster is required as a cofactor.

It localises to the cytoplasm. The enzyme catalyses glycyl-[protein] + reduced [flavodoxin] + S-adenosyl-L-methionine = glycin-2-yl radical-[protein] + semiquinone [flavodoxin] + 5'-deoxyadenosine + L-methionine + H(+). Functionally, activation of anaerobic ribonucleoside-triphosphate reductase under anaerobic conditions by generation of an organic free radical, using S-adenosylmethionine and reduced flavodoxin as cosubstrates to produce 5'-deoxy-adenosine. The sequence is that of Anaerobic ribonucleoside-triphosphate reductase-activating protein (nrdG) from Haemophilus influenzae (strain ATCC 51907 / DSM 11121 / KW20 / Rd).